We begin with the raw amino-acid sequence, 217 residues long: UPF0502 protein swp_3027 (217 aa).

Belongs to the UPF0502 family.

In Shewanella piezotolerans (strain WP3 / JCM 13877), this protein is UPF0502 protein swp_3027.